The following is a 227-amino-acid chain: uncharacterized protein (227 aa).

Residues 7–26 form a helical membrane-spanning segment; it reads IITLTILIFISGLLTAFLLL.

It is found in the membrane. This is an uncharacterized protein from Haemophilus influenzae (strain ATCC 51907 / DSM 11121 / KW20 / Rd).